The primary structure comprises 206 residues: dCTP deaminase, dUMP-forming (206 aa).

DCTP contacts are provided by residues 117–122, Asp135, 143–145, Gln163, Tyr177, Lys184, and Gln188; these read RSSFGR and TLE. Residue Glu145 is the Proton donor/acceptor of the active site.

Belongs to the dCTP deaminase family. Homotrimer.

The catalysed reaction is dCTP + 2 H2O = dUMP + NH4(+) + diphosphate. Its pathway is pyrimidine metabolism; dUMP biosynthesis; dUMP from dCTP: step 1/1. Functionally, bifunctional enzyme that catalyzes both the deamination of dCTP to dUTP and the hydrolysis of dUTP to dUMP without releasing the toxic dUTP intermediate. In Methanococcus maripaludis (strain C6 / ATCC BAA-1332), this protein is dCTP deaminase, dUMP-forming.